We begin with the raw amino-acid sequence, 454 residues long: Bifunctional protein GlmU (454 aa).

The tract at residues methionine 1–lysine 225 is pyrophosphorylase. Residues leucine 6–glycine 9, lysine 20, glutamine 71, glycine 76–threonine 77, tyrosine 98–aspartate 100, glycine 135, glutamate 150, asparagine 165, and asparagine 223 contribute to the UDP-N-acetyl-alpha-D-glucosamine site. Mg(2+) is bound at residue aspartate 100. Asparagine 223 contacts Mg(2+). The segment at valine 226–threonine 246 is linker. The interval glycine 247 to glutamine 454 is N-acetyltransferase. UDP-N-acetyl-alpha-D-glucosamine contacts are provided by arginine 329 and lysine 347. Histidine 359 serves as the catalytic Proton acceptor. 2 residues coordinate UDP-N-acetyl-alpha-D-glucosamine: tyrosine 362 and asparagine 373. Residues alanine 376, asparagine 382–tyrosine 383, serine 401, alanine 419, and arginine 436 contribute to the acetyl-CoA site.

In the N-terminal section; belongs to the N-acetylglucosamine-1-phosphate uridyltransferase family. The protein in the C-terminal section; belongs to the transferase hexapeptide repeat family. In terms of assembly, homotrimer. Mg(2+) serves as cofactor.

The protein resides in the cytoplasm. The catalysed reaction is alpha-D-glucosamine 1-phosphate + acetyl-CoA = N-acetyl-alpha-D-glucosamine 1-phosphate + CoA + H(+). The enzyme catalyses N-acetyl-alpha-D-glucosamine 1-phosphate + UTP + H(+) = UDP-N-acetyl-alpha-D-glucosamine + diphosphate. Its pathway is nucleotide-sugar biosynthesis; UDP-N-acetyl-alpha-D-glucosamine biosynthesis; N-acetyl-alpha-D-glucosamine 1-phosphate from alpha-D-glucosamine 6-phosphate (route II): step 2/2. It participates in nucleotide-sugar biosynthesis; UDP-N-acetyl-alpha-D-glucosamine biosynthesis; UDP-N-acetyl-alpha-D-glucosamine from N-acetyl-alpha-D-glucosamine 1-phosphate: step 1/1. The protein operates within bacterial outer membrane biogenesis; LPS lipid A biosynthesis. In terms of biological role, catalyzes the last two sequential reactions in the de novo biosynthetic pathway for UDP-N-acetylglucosamine (UDP-GlcNAc). The C-terminal domain catalyzes the transfer of acetyl group from acetyl coenzyme A to glucosamine-1-phosphate (GlcN-1-P) to produce N-acetylglucosamine-1-phosphate (GlcNAc-1-P), which is converted into UDP-GlcNAc by the transfer of uridine 5-monophosphate (from uridine 5-triphosphate), a reaction catalyzed by the N-terminal domain. The chain is Bifunctional protein GlmU from Cupriavidus pinatubonensis (strain JMP 134 / LMG 1197) (Cupriavidus necator (strain JMP 134)).